We begin with the raw amino-acid sequence, 436 residues long: GDP-mannose 6-dehydrogenase (436 aa).

NAD(+) contacts are provided by Y10, V11, D30, K35, T86, and T124. GDP-alpha-D-mannuronate-binding residues include E161, K210, N214, H217, N225, Y256, Y257, R259, F262, and G265. C268 (nucleophile) is an active-site residue. K271 provides a ligand contact to NAD(+). The tract at residues 278 to 295 (YRASQLDVEHPMLGSLMR) is inter-domain linker. K324 contributes to the GDP-alpha-D-mannuronate binding site. R331 is a binding site for NAD(+).

Belongs to the UDP-glucose/GDP-mannose dehydrogenase family. In terms of assembly, forms a domain-swapped dimer with each peptide contributing to each active site. The dimers assemble further. X-ray structures indicate this enzyme exists as a homotetramer PubMed:12705829, but kinetic and physical results obtained in PubMed:2470755 and PubMed:12135385 indicate that it is probably a homohexamer.

The enzyme catalyses GDP-alpha-D-mannose + 2 NAD(+) + H2O = GDP-alpha-D-mannuronate + 2 NADH + 3 H(+). It functions in the pathway glycan biosynthesis; alginate biosynthesis. Its activity is regulated as follows. Inhibited by GMP, ATP, GDP-D-glucose and maltose. Inhibited by GMP and deamidoNAD. In terms of biological role, catalyzes the oxidation of guanosine diphospho-D-mannose (GDP-D-mannose) to GDP-D-mannuronic acid, a precursor for alginate polymerization. The alginate layer causes a mucoid phenotype and provides a protective barrier against host immune defenses and antibiotics. Other sugars are not used as substrates. This chain is GDP-mannose 6-dehydrogenase, found in Pseudomonas aeruginosa (strain ATCC 15692 / DSM 22644 / CIP 104116 / JCM 14847 / LMG 12228 / 1C / PRS 101 / PAO1).